A 103-amino-acid chain; its full sequence is Putative membrane protein insertion efficiency factor (103 aa).

Belongs to the UPF0161 family.

The protein localises to the cell inner membrane. In terms of biological role, could be involved in insertion of integral membrane proteins into the membrane. The polypeptide is Putative membrane protein insertion efficiency factor (Chlamydia felis (strain Fe/C-56) (Chlamydophila felis)).